A 369-amino-acid chain; its full sequence is 2-aminoethylphosphonate--pyruvate transaminase (369 aa).

Lys-193 carries the N6-(pyridoxal phosphate)lysine modification.

Belongs to the class-V pyridoxal-phosphate-dependent aminotransferase family. PhnW subfamily. Homodimer. Requires pyridoxal 5'-phosphate as cofactor.

The enzyme catalyses (2-aminoethyl)phosphonate + pyruvate = phosphonoacetaldehyde + L-alanine. Functionally, involved in phosphonate degradation. In Pseudomonas fluorescens (strain ATCC BAA-477 / NRRL B-23932 / Pf-5), this protein is 2-aminoethylphosphonate--pyruvate transaminase.